The primary structure comprises 78 residues: Large ribosomal subunit protein bL28 (78 aa).

This sequence belongs to the bacterial ribosomal protein bL28 family.

This Synechococcus sp. (strain CC9605) protein is Large ribosomal subunit protein bL28.